The following is a 118-amino-acid chain: 5-hydroxyisourate hydrolase (118 aa).

Positions 7, 46, and 115 each coordinate substrate.

Belongs to the transthyretin family. 5-hydroxyisourate hydrolase subfamily. Homotetramer.

It catalyses the reaction 5-hydroxyisourate + H2O = 5-hydroxy-2-oxo-4-ureido-2,5-dihydro-1H-imidazole-5-carboxylate + H(+). Catalyzes the hydrolysis of 5-hydroxyisourate (HIU) to 2-oxo-4-hydroxy-4-carboxy-5-ureidoimidazoline (OHCU). This Brucella suis biovar 1 (strain 1330) protein is 5-hydroxyisourate hydrolase.